The following is a 183-amino-acid chain: MSQPPKILLLYAHPEPQDSVANRVLLQPAQQLANVTVHDLYAHYPDFFIDIHHEQQLLREHQIIVFQHPFYTYSCPALLKEWLDRVLSRGFANGIGGNALAGKYWRSVITTGEPEDAYHADGNNRYPMDDLLRPFELTAAMCRMHWMRPMIVYWARRLQPDVLSSQARAYGEWLSSPLPEEER.

The protein belongs to the NAD(P)H dehydrogenase (quinone) family. KefG subfamily. In terms of assembly, interacts with KefB.

Its subcellular location is the cell inner membrane. It catalyses the reaction a quinone + NADH + H(+) = a quinol + NAD(+). It carries out the reaction a quinone + NADPH + H(+) = a quinol + NADP(+). In terms of biological role, regulatory subunit of a potassium efflux system that confers protection against electrophiles. Required for full activity of KefB. The polypeptide is Glutathione-regulated potassium-efflux system ancillary protein KefG (Pectobacterium atrosepticum (strain SCRI 1043 / ATCC BAA-672) (Erwinia carotovora subsp. atroseptica)).